A 114-amino-acid chain; its full sequence is uncharacterized protein (114 aa).

This is an uncharacterized protein from Sputnik virophage.